A 200-amino-acid polypeptide reads, in one-letter code: BREX protein BrxA (200 aa).

This sequence belongs to the BrxA family.

BREX systems (bacteriophage exclusion) provide immunity against bacteriophage. Part of a type 1 BREX system. This system allows phage adsorption but prevents phage DNA replication, without degradation of the phage DNA. Methylation of bacterial DNA by PglX probably guides self/non-self discrimination. When the brxA-brxB-brxC-pglX and pglZ-brxL operons are transformed into a susceptible B.subtilis strain (BEST7003) they confer resistance to bacteriophages SPbeta, SP16, Zeta, phi3T and SP02 and partial protection to phages SP01 and SP82G (these include lytic and temperate phage). They do not protect against phages phi105, rho10 or rho14. Additionally confers a very slight reduction in efficiency of plasmid transformation. This chain is BREX protein BrxA, found in Bacillus cereus (strain H3081.97).